A 338-amino-acid chain; its full sequence is Lipoate-protein ligase A (338 aa).

The BPL/LPL catalytic domain maps to 29 to 216; it reads PATQRVLFLW…AFFAHYGERV (188 aa). Residues arginine 71, 76–79, and lysine 134 contribute to the ATP site; that span reads GAVF. Lysine 134 contributes to the (R)-lipoate binding site.

The protein belongs to the LplA family. In terms of assembly, monomer.

Its subcellular location is the cytoplasm. The catalysed reaction is L-lysyl-[lipoyl-carrier protein] + (R)-lipoate + ATP = N(6)-[(R)-lipoyl]-L-lysyl-[lipoyl-carrier protein] + AMP + diphosphate + H(+). It functions in the pathway protein modification; protein lipoylation via exogenous pathway; protein N(6)-(lipoyl)lysine from lipoate: step 1/2. The protein operates within protein modification; protein lipoylation via exogenous pathway; protein N(6)-(lipoyl)lysine from lipoate: step 2/2. Functionally, catalyzes both the ATP-dependent activation of exogenously supplied lipoate to lipoyl-AMP and the transfer of the activated lipoyl onto the lipoyl domains of lipoate-dependent enzymes. The protein is Lipoate-protein ligase A of Shigella dysenteriae serotype 1 (strain Sd197).